The following is a 695-amino-acid chain: uncharacterized protein (695 aa).

Disordered regions lie at residues 1–112 (MSRL…KHKK) and 242–262 (MKKVSQQLKPQKNTNDSNNDH). A compositionally biased stretch (low complexity) spans 32-47 (DSSSSSDSPNFFPSSS). Positions 96 to 107 (KTEKEKEKEPIQ) are enriched in basic and acidic residues. The region spanning 278-492 (KPRTKLLLLG…KIDKEADTNH (215 aa)) is the tr-type G domain. Residues 287–294 (GPPKSGKK), 357–361 (IFTTN), and 417–420 (TKMD) each bind GTP.

It belongs to the TRAFAC class translation factor GTPase superfamily. Classic translation factor GTPase family.

The protein resides in the cytoplasm. It is found in the nucleus. This is an uncharacterized protein from Schizosaccharomyces pombe (strain 972 / ATCC 24843) (Fission yeast).